Consider the following 193-residue polypeptide: Potassium-transporting ATPase KdpC subunit (193 aa).

Residues 14-34 (ITFTFLVLCGLVYPLIVTGIA) traverse the membrane as a helical segment.

Belongs to the KdpC family. As to quaternary structure, the system is composed of three essential subunits: KdpA, KdpB and KdpC.

It is found in the cell membrane. In terms of biological role, part of the high-affinity ATP-driven potassium transport (or Kdp) system, which catalyzes the hydrolysis of ATP coupled with the electrogenic transport of potassium into the cytoplasm. This subunit acts as a catalytic chaperone that increases the ATP-binding affinity of the ATP-hydrolyzing subunit KdpB by the formation of a transient KdpB/KdpC/ATP ternary complex. The chain is Potassium-transporting ATPase KdpC subunit from Bacillus anthracis (strain A0248).